Reading from the N-terminus, the 196-residue chain is Secreted effector protein SseB (196 aa).

It belongs to the EspA/SseB family. As to quaternary structure, may form a complex with SseC and SseD. Binds to the chaperone SseA.

It is found in the secreted. The protein resides in the cell surface. Its function is as follows. Effector proteins function to alter host cell physiology and promote bacterial survival in host tissues. May act as a translocator that mediates translocation of SPI-2 T3SS effector proteins from intraphagosomal bacterial cells into the host cells. SseB is required for correct localization of SseC and SseD on the bacterial cell surface. This is Secreted effector protein SseB (sseB) from Salmonella typhimurium (strain LT2 / SGSC1412 / ATCC 700720).